A 432-amino-acid chain; its full sequence is Glutamate-1-semialdehyde 2,1-aminomutase 1 (432 aa).

N6-(pyridoxal phosphate)lysine is present on K268.

This sequence belongs to the class-III pyridoxal-phosphate-dependent aminotransferase family. HemL subfamily. In terms of assembly, homodimer. Requires pyridoxal 5'-phosphate as cofactor.

The protein resides in the cytoplasm. It catalyses the reaction (S)-4-amino-5-oxopentanoate = 5-aminolevulinate. It participates in porphyrin-containing compound metabolism; protoporphyrin-IX biosynthesis; 5-aminolevulinate from L-glutamyl-tRNA(Glu): step 2/2. This chain is Glutamate-1-semialdehyde 2,1-aminomutase 1, found in Bacillus cereus (strain ZK / E33L).